A 216-amino-acid polypeptide reads, in one-letter code: MAVSAKYDEFNHWWATEGDWVEEPNYRRNGMSGVQCVERNGKKLYVKRMTHHLFHSVRYPFGRPTIVREVAVIKELERAGVIVPKIVFGEAVKIEGEWRALLVTEDMAGFISIADWYAQHAVSPYSDEVRQAMLKAVALAFKKMHSINRQHGCCYVRHIYVKTEGNAEAGFLDLEKSRRRLRRDKAINHDFRQLEKYLEPIPKADWEQVKAYYYAM.

The protein belongs to the protein kinase superfamily. KdkA/RfaP family.

May be an environmental sensor responsive to several stimuli, including internal pH, proton motive force, temperature, and possibly other unknown factors. The protein is Protein InaA (inaA) of Escherichia coli (strain K12).